We begin with the raw amino-acid sequence, 564 residues long: Alpha-farnesene synthase (564 aa).

Mg(2+)-binding residues include Asp-313, Asp-317, Thr-464, and Glu-468. The DDXXD motif signature appears at 313–317; the sequence is DDVYD.

This sequence belongs to the terpene synthase family. Requires Mg(2+) as cofactor.

It carries out the reaction (2E,6E)-farnesyl diphosphate = (3E,6E)-alpha-farnesene + diphosphate. Catalyzes the cyclization of farnesyl diphosphate to (E,E)-alpha-farnesene. This chain is Alpha-farnesene synthase (TPS7), found in Ricinus communis (Castor bean).